The chain runs to 599 residues: CAP-Gly domain-containing linker protein 4 (599 aa).

ANK repeat units follow at residues T65–D101, T149–A180, and N186–F215. The CAP-Gly 1 domain occupies G303–P345. A disordered region spans residues S387–E482. Positions L443 to S462 are enriched in low complexity. Positions L468–N478 are enriched in polar residues. Positions G505–P547 constitute a CAP-Gly 2 domain. S557 bears the Phosphoserine mark. The interval S565–K599 is disordered. The segment covering F576–S587 has biased composition (low complexity).

This chain is CAP-Gly domain-containing linker protein 4 (Clip4), found in Rattus norvegicus (Rat).